The following is a 690-amino-acid chain: Elongation factor G (690 aa).

The 276-residue stretch at 8-283 (EDYRNFGIMA…AVVDFLPSPL (276 aa)) folds into the tr-type G domain. GTP is bound by residues 17–24 (AHIDAGKT), 81–85 (DTPGH), and 135–138 (NKMD).

Belongs to the TRAFAC class translation factor GTPase superfamily. Classic translation factor GTPase family. EF-G/EF-2 subfamily.

The protein localises to the cytoplasm. In terms of biological role, catalyzes the GTP-dependent ribosomal translocation step during translation elongation. During this step, the ribosome changes from the pre-translocational (PRE) to the post-translocational (POST) state as the newly formed A-site-bound peptidyl-tRNA and P-site-bound deacylated tRNA move to the P and E sites, respectively. Catalyzes the coordinated movement of the two tRNA molecules, the mRNA and conformational changes in the ribosome. The protein is Elongation factor G of Nitrobacter hamburgensis (strain DSM 10229 / NCIMB 13809 / X14).